The sequence spans 865 residues: Probable beta-glucosidase J (865 aa).

Asp233 is an active-site residue. N-linked (GlcNAc...) asparagine glycans are attached at residues Asn330, Asn447, Asn503, and Asn764. Positions Thr411–Val579 constitute a PA14 domain.

It belongs to the glycosyl hydrolase 3 family.

The protein resides in the secreted. The enzyme catalyses Hydrolysis of terminal, non-reducing beta-D-glucosyl residues with release of beta-D-glucose.. It functions in the pathway glycan metabolism; cellulose degradation. Functionally, beta-glucosidases are one of a number of cellulolytic enzymes involved in the degradation of cellulosic biomass. Catalyzes the last step releasing glucose from the inhibitory cellobiose. This Aspergillus fumigatus (strain CBS 144.89 / FGSC A1163 / CEA10) (Neosartorya fumigata) protein is Probable beta-glucosidase J (bglJ).